We begin with the raw amino-acid sequence, 1620 residues long: DNA (cytosine-5)-methyltransferase 1 (1620 aa).

The tract at residues M1–P21 is disordered. An interaction with DMAP1 region spans residues M1–A120. The tract at residues M1 to L145 is interaction with DNMT3A. Interaction with the PRC2/EED-EZH2 complex stretches follow at residues M1–K343 and A305–G609. Position 15 is a phosphoserine (S15). In terms of domain architecture, DMAP1-binding spans P16–N109. K70 bears the N6,N6-dimethyllysine; by EHMT2 mark. The disordered stretch occupies residues T96–P369. The span at P126–R137 shows a compositional bias: basic residues. Position 138 is a phosphoserine (S138). At K139 the chain carries N6-methyllysine; by SETD7. Position 140 is a phosphoserine (S140). The segment covering T144–A155 has biased composition (polar residues). The residue at position 146 (S146) is a Phosphoserine; by CK1. The interaction with DNMT3B stretch occupies residues V147–L217. Phosphoserine is present on residues S150 and S152. Positions R161 to G172 are interaction with PCNA. Position 164 is a phosphothreonine (T164). K171 is subject to N6-acetyllysine. The short motif at K175–R202 is the Nuclear localization signal element. The span at A192–D205 shows a compositional bias: basic and acidic residues. Position 240 is a phosphoserine (S240). Basic and acidic residues-rich tracts occupy residues R246 to H267 and Q286 to E300. K255 is subject to N6-acetyllysine; alternate. K255 is covalently cross-linked (Glycyl lysine isopeptide (Lys-Gly) (interchain with G-Cter in SUMO2); alternate). Residues T308 to R317 show a composition bias toward acidic residues. The segment at K328–L556 is DNA replication foci-targeting sequence. Residues C359 and C362 each contribute to the Zn(2+) site. Residue K372 is modified to N6-acetyllysine. Zn(2+) contacts are provided by C420 and H424. Phosphoserine occurs at positions 515 and 555. The CXXC-type zinc-finger motif lies at N649–P695. 8 residues coordinate Zn(2+): C656, C659, C662, C667, C670, C673, C689, and C694. The autoinhibitory linker stretch occupies residues N696–E757. Residues N696–D813 are interaction with HDAC1. The segment covering A702 to S713 has biased composition (acidic residues). Residues A702–D732 are disordered. Phosphoserine is present on residues S713 and S717. A compositionally biased stretch (basic residues) spans K719–N730. Phosphoserine is present on S735. Residue K752 is modified to N6-acetyllysine. Positions E758–P884 constitute a BAH 1 domain. S882 carries the post-translational modification Phosphoserine. Residues K895, K961, K965, and K979 each carry the N6-acetyllysine modification. In terms of domain architecture, BAH 2 spans H976 to P1103. Residues K1097–A1136 form a disordered region. 6 repeat units span residues K1112–G1113, K1114–G1115, K1116–G1117, K1118–G1119, K1120–G1121, and K1122–G1123. The tract at residues K1112–H1125 is 7 X 2 AA tandem repeats of K-G. Residues G1113–H1125 show a composition bias toward basic residues. 6 positions are modified to N6-acetyllysine: K1114, K1116, K1118, K1120, K1122, and K1124. The stretch at K1124 to H1125 is one 7; approximate repeat. The interval K1124 to D1620 is interaction with the PRC2/EED-EZH2 complex. Over residues Q1126–A1135 the composition is skewed to basic and acidic residues. One can recognise an SAM-dependent MTase C5-type domain in the interval L1142–S1601. The catalytic stretch occupies residues L1142 to D1620. S-adenosyl-L-methionine is bound by residues S1149, G1153 to L1154, E1171 to M1172, and D1193 to C1194. The active site involves C1229. N6-acetyllysine is present on residues K1352 and K1418. Residue V1582 participates in S-adenosyl-L-methionine binding. A Glycyl lysine isopeptide (Lys-Gly) (interchain with G-Cter in SUMO2) cross-link involves residue K1611.

It belongs to the class I-like SAM-binding methyltransferase superfamily. C5-methyltransferase family. In terms of assembly, homodimer. Forms a stable complex with E2F1, BB1 and HDAC1. Forms a complex with DMAP1 and HDAC2, with direct interaction. Interacts with the PRC2/EED-EZH2 complex. Probably part of a corepressor complex containing ZNF304, TRIM28, SETDB1 and DNMT1. Interacts with UHRF1; promoting its recruitment to hemimethylated DNA. Interacts with USP7, promoting its deubiquitination. Interacts with BAZ2A/TIP5. Interacts with PCNA. Interacts with MBD2 and MBD3. Interacts with DNMT3A and DNMT3B. Interacts with UBC9. Interacts with HDAC1. Interacts with CSNK1D. Interacts with SIRT7. Interacts with ZNF263; recruited to the SIX3 promoter along with other proteins involved in chromatin modification and transcriptional corepression where it contributes to transcriptional repression. Interacts with L3MBTL3 and DCAF5; the interaction requires DNMT1 methylation at Lys-139 and is necessary to target DNMT1 for ubiquitination by the CRL4-DCAF5 E3 ubiquitin ligase complex and proteasomal degradation. Interacts with PHF20L1; the interaction requires DNMT1 methylation at Lys-139 and protects DNMT1 from ubiquitination and proteasomal degradation. In terms of processing, sumoylated; sumoylation increases activity. Phosphorylation at Ser-146 by CK1 reduces DNA-binding activity. Post-translationally, acetylation on multiple lysines, mainly by KAT2B/PCAF, regulates cell cycle G(2)/M transition. Deacetylation of Lys-1352 and Lys-1418 by SIRT1 increases methyltransferase activity. In terms of processing, phosphorylation of Ser-152 by CDKs is important for enzymatic activity and protein stability. Phosphorylation of Ser-140 by AKT1 prevents methylation by SETD7 thereby increasing DNMT1 stability. Methylation at Lys-139 by SETD7 is necessary for the regulation of DNMT1 proteasomal degradation. Post-translationally, ubiquitinated by UHRF1; interaction with USP7 counteracts ubiquitination by UHRF1 by promoting deubiquitination and preventing degradation by the proteasome. As to expression, isoform 1 is expressed in embryonic stem cells and in somatic tissues. Isoform 2 is expressed in oocytes, preimplantation embryos, testis and in skeletal muscle during myogenesis.

It is found in the nucleus. Its subcellular location is the cytoplasm. The catalysed reaction is a 2'-deoxycytidine in DNA + S-adenosyl-L-methionine = a 5-methyl-2'-deoxycytidine in DNA + S-adenosyl-L-homocysteine + H(+). Its activity is regulated as follows. Allosterically regulated. The binding of 5-methylcytosine-containing DNA to the N-terminal parts of DNMT1 causes an allosteric activation of the catalytic domain by a direct interaction of its Zn-binding domain with the catalytic domain. In terms of biological role, methylates CpG residues. Preferentially methylates hemimethylated DNA. Associates with DNA replication sites in S phase maintaining the methylation pattern in the newly synthesized strand, that is essential for epigenetic inheritance. Associates with chromatin during G2 and M phases to maintain DNA methylation independently of replication. It is responsible for maintaining methylation patterns established in development. DNA methylation is coordinated with methylation of histones. Mediates transcriptional repression by direct binding to HDAC2. In association with DNMT3B and via the recruitment of CTCFL/BORIS, involved in activation of BAG1 gene expression by modulating dimethylation of promoter histone H3 at H3K4 and H3K9. Probably forms a corepressor complex required for activated KRAS-mediated promoter hypermethylation and transcriptional silencing of tumor suppressor genes (TSGs) or other tumor-related genes in colorectal cancer (CRC) cells. Also required to maintain a transcriptionally repressive state of genes in undifferentiated embryonic stem cells (ESCs). Associates at promoter regions of tumor suppressor genes (TSGs) leading to their gene silencing. Promotes tumor growth. This Mus musculus (Mouse) protein is DNA (cytosine-5)-methyltransferase 1 (Dnmt1).